The following is a 497-amino-acid chain: Kynureninase (497 aa).

Residues 59 to 86 (GRLPAYPPNHAKPGETATAQNGTSNTND) are disordered. A compositionally biased stretch (polar residues) spans 75-86 (ATAQNGTSNTND). Pyridoxal 5'-phosphate-binding positions include leucine 166, threonine 167, 194 to 197 (FPSD), aspartate 278, histidine 281, and tyrosine 303. Lysine 304 carries the post-translational modification N6-(pyridoxal phosphate)lysine. Tryptophan 337 and asparagine 365 together coordinate pyridoxal 5'-phosphate.

Belongs to the kynureninase family. As to quaternary structure, homodimer. Requires pyridoxal 5'-phosphate as cofactor.

It is found in the cytoplasm. It carries out the reaction L-kynurenine + H2O = anthranilate + L-alanine + H(+). It catalyses the reaction 3-hydroxy-L-kynurenine + H2O = 3-hydroxyanthranilate + L-alanine + H(+). It functions in the pathway amino-acid degradation; L-kynurenine degradation; L-alanine and anthranilate from L-kynurenine: step 1/1. The protein operates within cofactor biosynthesis; NAD(+) biosynthesis; quinolinate from L-kynurenine: step 2/3. Its function is as follows. Catalyzes the cleavage of L-kynurenine (L-Kyn) and L-3-hydroxykynurenine (L-3OHKyn) into anthranilic acid (AA) and 3-hydroxyanthranilic acid (3-OHAA), respectively. The polypeptide is Kynureninase (Pyricularia oryzae (strain 70-15 / ATCC MYA-4617 / FGSC 8958) (Rice blast fungus)).